A 194-amino-acid polypeptide reads, in one-letter code: Adenylate kinase isoenzyme 1 (194 aa).

Met1 is modified (N-acetylmethionine). Position 18-23 (18-23 (GSGKGT)) interacts with ATP. Residue Ser38 is modified to Phosphoserine. The segment at 38-67 (STGDLLRAEVSSGSARGKKLSEIMEKGQLV) is NMP. AMP is bound by residues Thr39, Arg44, 65-67 (QLV), 94-97 (GYPR), and Gln101. Residues 131-141 (KRGETSGRVDD) form an LID region. Arg132 is a binding site for ATP. AMP is bound by residues Arg138 and Arg149. Residue Gly177 participates in ATP binding.

This sequence belongs to the adenylate kinase family. AK1 subfamily. Monomer. The cofactor is Mg(2+).

The protein resides in the cytoplasm. The catalysed reaction is a ribonucleoside 5'-phosphate + ATP = a ribonucleoside 5'-diphosphate + ADP. The enzyme catalyses AMP + ATP = 2 ADP. It catalyses the reaction dAMP + ATP = dADP + ADP. It carries out the reaction dATP + AMP = dADP + ADP. The catalysed reaction is dAMP + dATP = 2 dADP. The enzyme catalyses a 2'-deoxyribonucleoside 5'-diphosphate + ATP = a 2'-deoxyribonucleoside 5'-triphosphate + ADP. It catalyses the reaction a ribonucleoside 5'-diphosphate + ATP = a ribonucleoside 5'-triphosphate + ADP. It carries out the reaction CDP + GTP = CTP + GDP. The catalysed reaction is GDP + ATP = GTP + ADP. The enzyme catalyses UDP + ATP = UTP + ADP. It catalyses the reaction GTP + UDP = UTP + GDP. It carries out the reaction dTDP + GTP = dTTP + GDP. The catalysed reaction is dCDP + GTP = dCTP + GDP. The enzyme catalyses dGDP + ATP = dGTP + ADP. It catalyses the reaction dADP + GTP = dATP + GDP. It carries out the reaction thiamine diphosphate + ADP = thiamine triphosphate + AMP. Catalyzes the reversible transfer of the terminal phosphate group between ATP and AMP. Also displays broad nucleoside diphosphate kinase activity. Plays an important role in cellular energy homeostasis and in adenine nucleotide metabolism. Also catalyzes at a very low rate the synthesis of thiamine triphosphate (ThTP) from thiamine diphosphate (ThDP) and ADP. The chain is Adenylate kinase isoenzyme 1 from Oryctolagus cuniculus (Rabbit).